The chain runs to 265 residues: Arcelin-2 (265 aa).

A signal peptide spans 1 to 21 (MASSNLLTLALFLVLLTHANS). 2 N-linked (GlcNAc...) asparagine glycosylation sites follow: N33 and N89. C165 and C201 are joined by a disulfide.

This sequence belongs to the leguminous lectin family.

Functionally, seed storage. This carbohydrate-binding lectin has toxic effects on bean bruchid pests. Antibiosis properties of legume lectins are proposed to be due to the lysis of epithelial cells of the intestine by binding to the carbohydrate moieties of these proteins. The sequence is that of Arcelin-2 (ARC2) from Phaseolus vulgaris (Kidney bean).